The chain runs to 85 residues: Probable oxaloacetate decarboxylase gamma chain (85 aa).

Residues 15–35 form a helical membrane-spanning segment; sequence ISGMGFVLLFLIVLIYAISFI.

Belongs to the OadG family. As to quaternary structure, heterotrimer of an alpha, a beta and a gamma subunit. The cofactor is Na(+).

The protein resides in the cell membrane. The enzyme catalyses oxaloacetate + 2 Na(+)(in) + H(+) = pyruvate + 2 Na(+)(out) + CO2. Its function is as follows. Catalyzes the decarboxylation of oxaloacetate coupled to Na(+) translocation. The polypeptide is Probable oxaloacetate decarboxylase gamma chain (Actinobacillus pleuropneumoniae serotype 5b (strain L20)).